Here is a 120-residue protein sequence, read N- to C-terminus: NAD(P)H-quinone oxidoreductase subunit 3, chloroplastic (120 aa).

The next 3 helical transmembrane spans lie at 9 to 29 (IFWA…LISG), 64 to 84 (MFAL…PWAM), and 88 to 108 (VLGV…IVGS).

It belongs to the complex I subunit 3 family. As to quaternary structure, NDH is composed of at least 16 different subunits, 5 of which are encoded in the nucleus.

It localises to the plastid. It is found in the chloroplast thylakoid membrane. It carries out the reaction a plastoquinone + NADH + (n+1) H(+)(in) = a plastoquinol + NAD(+) + n H(+)(out). It catalyses the reaction a plastoquinone + NADPH + (n+1) H(+)(in) = a plastoquinol + NADP(+) + n H(+)(out). Functionally, NDH shuttles electrons from NAD(P)H:plastoquinone, via FMN and iron-sulfur (Fe-S) centers, to quinones in the photosynthetic chain and possibly in a chloroplast respiratory chain. The immediate electron acceptor for the enzyme in this species is believed to be plastoquinone. Couples the redox reaction to proton translocation, and thus conserves the redox energy in a proton gradient. The sequence is that of NAD(P)H-quinone oxidoreductase subunit 3, chloroplastic from Acorus calamus var. americanus (American sweet flag).